The chain runs to 89 residues: Cell division protein FtsB (89 aa).

Residues 1–3 lie on the Cytoplasmic side of the membrane; the sequence is MRP. The helical transmembrane segment at 4 to 21 threads the bilayer; it reads IIAILIALFILLQYQLWF. At 22–89 the chain is on the periplasmic side; that stretch reads AAGGIVSVHH…KNEVFYQIVK (68 aa). Residues 29-62 are a coiled coil; the sequence is VHHLNENINHQIMENQKLKDRNTALLADIDDLKH.

This sequence belongs to the FtsB family. Part of a complex composed of FtsB, FtsL and FtsQ.

The protein localises to the cell inner membrane. Essential cell division protein. May link together the upstream cell division proteins, which are predominantly cytoplasmic, with the downstream cell division proteins, which are predominantly periplasmic. In Coxiella burnetii (strain RSA 493 / Nine Mile phase I), this protein is Cell division protein FtsB.